Here is a 291-residue protein sequence, read N- to C-terminus: Alpha-soluble NSF attachment protein (291 aa).

TPR repeat units follow at residues 14 to 51 (ADKR…FKMS), 77 to 110 (AASS…YTDE), 117 to 150 (AKHQ…FDGE), and 157 to 190 (HQCL…SLDN).

The protein belongs to the SNAP family. Interacts with nsfA and probably SNARE proteins.

The protein localises to the cytoplasmic vesicle membrane. Its function is as follows. May be required for vesicular transport between the endoplasmic reticulum and the Golgi apparatus. Involved in vesicle fusion with nsfA and probably SNARE proteins. The polypeptide is Alpha-soluble NSF attachment protein (snpA) (Dictyostelium discoideum (Social amoeba)).